A 314-amino-acid polypeptide reads, in one-letter code: Cytochrome f (314 aa).

Positions 1–30 (MATNKFFKSLLFTLTIAISSFGFCVENSSA) are cleaved as a signal peptide. Residues Y31, C51, C54, and H55 each contribute to the heme site. Residues 280–300 (ILGYLAFCFCLLLTQVLLVLK) traverse the membrane as a helical segment.

It belongs to the cytochrome f family. In terms of assembly, the 4 large subunits of the cytochrome b6-f complex are cytochrome b6, subunit IV (17 kDa polypeptide, petD), cytochrome f and the Rieske protein, while the 4 small subunits are PetG, PetL, PetM and PetN. The complex functions as a dimer. It depends on heme as a cofactor.

It localises to the plastid. It is found in the chloroplast thylakoid membrane. Its function is as follows. Component of the cytochrome b6-f complex, which mediates electron transfer between photosystem II (PSII) and photosystem I (PSI), cyclic electron flow around PSI, and state transitions. This Thalassiosira pseudonana (Marine diatom) protein is Cytochrome f.